Here is a 324-residue protein sequence, read N- to C-terminus: Putative exosome complex exonuclease RRP42 (324 aa).

This sequence belongs to the RNase PH family. In terms of assembly, component of the RNA exosome complex.

Its subcellular location is the nucleus. It is found in the nucleolus. The protein resides in the cytoplasm. Functionally, non-catalytic component of the RNA exosome complex which has 3'-&gt;5' exoribonuclease activity and participates in a multitude of cellular RNA processing and degradation events. This Dictyostelium discoideum (Social amoeba) protein is Putative exosome complex exonuclease RRP42 (exosc7).